The chain runs to 353 residues: UPF0283 membrane protein YcjF (353 aa).

The span at 1–19 shows a compositional bias: basic and acidic residues; sequence MSEPLKPRIDFAEPLKEEP. A disordered region spans residues 1–35; the sequence is MSEPLKPRIDFAEPLKEEPTSAFKAQQTFSEAESR. Helical transmembrane passes span 70 to 90, 100 to 120, and 213 to 233; these read MVMGGLALFGASVVGQGVQWT, VALGGCAAGALIIGAGVGSVV, and ESTLMIAVSPLALVDMAFIAW.

It belongs to the UPF0283 family.

It localises to the cell inner membrane. This chain is UPF0283 membrane protein YcjF, found in Salmonella paratyphi C (strain RKS4594).